The following is a 216-amino-acid chain: GTPase IMAP family member GIMD1 (216 aa).

The AIG1-type G domain maps to 5 to 216 (KMIINLAVLG…ENHFQVLSFT (212 aa)). GTP-binding positions include 14-22 (GKTQSGKSS), serine 35, and 147-149 (HAE).

Belongs to the TRAFAC class TrmE-Era-EngA-EngB-Septin-like GTPase superfamily. AIG1/Toc34/Toc159-like paraseptin GTPase family. IAN subfamily.

In Rattus norvegicus (Rat), this protein is GTPase IMAP family member GIMD1 (Gimd1).